The chain runs to 175 residues: Co-chaperone protein HscB homolog (175 aa).

In terms of domain architecture, J spans 2 to 74; it reads NYFQLFNIEV…LQRAEYILVQ (73 aa).

It belongs to the HscB family. As to quaternary structure, interacts with HscA and stimulates its ATPase activity.

Functionally, co-chaperone involved in the maturation of iron-sulfur cluster-containing proteins. Seems to help targeting proteins to be folded toward HscA. The sequence is that of Co-chaperone protein HscB homolog from Colwellia psychrerythraea (strain 34H / ATCC BAA-681) (Vibrio psychroerythus).